Consider the following 475-residue polypeptide: GTPase Der (475 aa).

EngA-type G domains lie at 2-166 and 213-386; these read LRIA…NIPE and LKIA…ETVS. Residues 8-15, 55-59, 118-121, 219-226, 266-270, and 331-334 each bind GTP; these read GRPNVGKS, DTGGV, NKAD, DTAGL, and NKWD. The region spanning 387-471 is the KH-like domain; sequence RKVPTPVVNK…PFDLEIKEKA (85 aa).

The protein belongs to the TRAFAC class TrmE-Era-EngA-EngB-Septin-like GTPase superfamily. EngA (Der) GTPase family. In terms of assembly, associates with the 50S ribosomal subunit.

Its function is as follows. GTPase that plays an essential role in the late steps of ribosome biogenesis. This Chlamydia felis (strain Fe/C-56) (Chlamydophila felis) protein is GTPase Der.